A 501-amino-acid polypeptide reads, in one-letter code: Sucrose-6-phosphate hydrolase (501 aa).

Substrate contacts are provided by residues 44-47 (LLND), Gln63, 106-107 (YT), 167-168 (RD), and Glu222. The active site involves Asp47.

This sequence belongs to the glycosyl hydrolase 32 family.

The enzyme catalyses Hydrolysis of terminal non-reducing beta-D-fructofuranoside residues in beta-D-fructofuranosides.. It functions in the pathway glycan biosynthesis; sucrose metabolism. The chain is Sucrose-6-phosphate hydrolase (scrB) from Pediococcus pentosaceus.